The following is a 328-amino-acid chain: MRVLYERDGDVSIIRERVVAVVGYGSQGRAHAMNLRDSGVEVVIGLRPGPSFDAAMSDGFMPRSVQEAVSIADVAMLLTPDECMADVYAKAVRDYLRPGASVAFAHGFNVCYNQIPIGNGVGAFMAAPKAPGHMVRETYIAGWGTPHLVAAKPQCEHLRALAVSYAIANGGGAAGIIETTFVDETETDLFGEQAVLCGGLVELIRAGFDTLVSSGYEPELAYFECMHEMKLIVDVMNRGGVAALNESISNNAEYGEYVSGPRVIGAAVRSAMRRVLNDIRTGRYAKDFIMEGRSNSPTLTACRRAVGEHPIEAVGARLRSRMTCAHGT.

The 179-residue stretch at 1–179 folds into the KARI N-terminal Rossmann domain; that stretch reads MRVLYERDGD…GGGAAGIIET (179 aa). NADP(+) is bound by residues 24–27, arginine 47, and serine 51; that span reads YGSQ. Residue histidine 106 is part of the active site. Glycine 132 lines the NADP(+) pocket. The KARI C-terminal knotted domain occupies 180–325; sequence TFVDETETDL…ARLRSRMTCA (146 aa). Positions 188, 192, 224, and 228 each coordinate Mg(2+). Position 249 (serine 249) interacts with substrate.

Belongs to the ketol-acid reductoisomerase family. Requires Mg(2+) as cofactor.

It carries out the reaction (2R)-2,3-dihydroxy-3-methylbutanoate + NADP(+) = (2S)-2-acetolactate + NADPH + H(+). It catalyses the reaction (2R,3R)-2,3-dihydroxy-3-methylpentanoate + NADP(+) = (S)-2-ethyl-2-hydroxy-3-oxobutanoate + NADPH + H(+). Its pathway is amino-acid biosynthesis; L-isoleucine biosynthesis; L-isoleucine from 2-oxobutanoate: step 2/4. It functions in the pathway amino-acid biosynthesis; L-valine biosynthesis; L-valine from pyruvate: step 2/4. Functionally, involved in the biosynthesis of branched-chain amino acids (BCAA). Catalyzes an alkyl-migration followed by a ketol-acid reduction of (S)-2-acetolactate (S2AL) to yield (R)-2,3-dihydroxy-isovalerate. In the isomerase reaction, S2AL is rearranged via a Mg-dependent methyl migration to produce 3-hydroxy-3-methyl-2-ketobutyrate (HMKB). In the reductase reaction, this 2-ketoacid undergoes a metal-dependent reduction by NADPH to yield (R)-2,3-dihydroxy-isovalerate. The sequence is that of Ketol-acid reductoisomerase (NADP(+)) from Tremblaya princeps.